The following is a 232-amino-acid chain: MAKIAKRVSKTREGIDPNKAYALGEALKLLKDRSSVKFDETVEVAMNLGVDPRHADQMVRGVVNLPNGTGRSVRVAVFARGDKAEEAKAAGADIVGAEDLVDIVQKGTIDFDRCIATPDMMPLVGRLGKVLGPRGMMPNPKVGTVTTDVAAAVKASKGGAVEFRVEKAGIVHAGVGKVSFDVKALEENIRAFADAVTKAKPAGAKGNYVKKVSVTSTMGPGLKLDVSTLAAS.

It belongs to the universal ribosomal protein uL1 family. Part of the 50S ribosomal subunit.

In terms of biological role, binds directly to 23S rRNA. The L1 stalk is quite mobile in the ribosome, and is involved in E site tRNA release. Protein L1 is also a translational repressor protein, it controls the translation of the L11 operon by binding to its mRNA. The sequence is that of Large ribosomal subunit protein uL1 from Mesorhizobium japonicum (strain LMG 29417 / CECT 9101 / MAFF 303099) (Mesorhizobium loti (strain MAFF 303099)).